A 99-amino-acid chain; its full sequence is Aspartyl/glutamyl-tRNA(Asn/Gln) amidotransferase subunit C (99 aa).

The protein belongs to the GatC family. In terms of assembly, heterotrimer of A, B and C subunits.

The enzyme catalyses L-glutamyl-tRNA(Gln) + L-glutamine + ATP + H2O = L-glutaminyl-tRNA(Gln) + L-glutamate + ADP + phosphate + H(+). It carries out the reaction L-aspartyl-tRNA(Asn) + L-glutamine + ATP + H2O = L-asparaginyl-tRNA(Asn) + L-glutamate + ADP + phosphate + 2 H(+). Allows the formation of correctly charged Asn-tRNA(Asn) or Gln-tRNA(Gln) through the transamidation of misacylated Asp-tRNA(Asn) or Glu-tRNA(Gln) in organisms which lack either or both of asparaginyl-tRNA or glutaminyl-tRNA synthetases. The reaction takes place in the presence of glutamine and ATP through an activated phospho-Asp-tRNA(Asn) or phospho-Glu-tRNA(Gln). The protein is Aspartyl/glutamyl-tRNA(Asn/Gln) amidotransferase subunit C of Mycobacterium leprae (strain Br4923).